The sequence spans 166 residues: Myosin regulatory light chain 2, ventricular/cardiac muscle isoform (166 aa).

Residue alanine 2 is modified to N,N,N-trimethylalanine. 2 positions are modified to phosphoserine; by MLCK: serine 14 and serine 15. A Phosphoserine modification is found at serine 19. EF-hand domains follow at residues 24–59 (TQIQ…LGRV), 94–129 (DPEE…QAER), and 130–165 (FSKE…GEEK). Positions 37, 39, 41, and 48 each coordinate Ca(2+). Threonine 52 bears the Phosphothreonine mark.

As to quaternary structure, myosin is a hexamer of 2 heavy chains and 4 light chains. Interacts with MYOC. Post-translationally, N-terminus is methylated by METTL11A/NTM1. In terms of processing, phosphorylated by MYLK3 and MYLK2; promotes cardiac muscle contraction and function. Dephosphorylated by PPP1CB complexed to PPP1R12B. The phosphorylated form in adult is expressed as gradients across the heart from endocardium (low phosphorylation) to epicardium (high phosphorylation); regulates cardiac torsion and workload distribution. As to expression, abundantly expressed in both cardiac and slow skeletal muscle. In the adult heart, the phosphorylated form is highly expressed in epicardium and weakly in endocardium.

Its subcellular location is the cytoplasm. It is found in the myofibril. The protein localises to the sarcomere. It localises to the a band. Functionally, contractile protein that plays a role in heart development and function. Following phosphorylation, plays a role in cross-bridge cycling kinetics and cardiac muscle contraction by increasing myosin lever arm stiffness and promoting myosin head diffusion; as a consequence of the increase in maximum contraction force and calcium sensitivity of contraction force. These events altogether slow down myosin kinetics and prolong duty cycle resulting in accumulated myosins being cooperatively recruited to actin binding sites to sustain thin filament activation as a means to fine-tune myofilament calcium sensitivity to force. During cardiogenesis plays an early role in cardiac contractility by promoting cardiac myofibril assembly. The sequence is that of Myosin regulatory light chain 2, ventricular/cardiac muscle isoform from Mus musculus (Mouse).